The primary structure comprises 134 residues: Aspartate 1-decarboxylase (134 aa).

Residue serine 25 is the Schiff-base intermediate with substrate; via pyruvic acid of the active site. Serine 25 carries the post-translational modification Pyruvic acid (Ser). Substrate is bound at residue threonine 57. The active-site Proton donor is the tyrosine 58. 73–75 (GAA) is a binding site for substrate.

Belongs to the PanD family. Heterooctamer of four alpha and four beta subunits. Pyruvate serves as cofactor. In terms of processing, is synthesized initially as an inactive proenzyme, which is activated by self-cleavage at a specific serine bond to produce a beta-subunit with a hydroxyl group at its C-terminus and an alpha-subunit with a pyruvoyl group at its N-terminus.

It is found in the cytoplasm. The enzyme catalyses L-aspartate + H(+) = beta-alanine + CO2. Its pathway is cofactor biosynthesis; (R)-pantothenate biosynthesis; beta-alanine from L-aspartate: step 1/1. Catalyzes the pyruvoyl-dependent decarboxylation of aspartate to produce beta-alanine. This Sulfurihydrogenibium sp. (strain YO3AOP1) protein is Aspartate 1-decarboxylase.